Consider the following 149-residue polypeptide: UPF0756 membrane protein MS1439 (149 aa).

Helical transmembrane passes span Ile-10–Leu-32, Val-56–Leu-76, Phe-82–Gly-102, and Val-126–Ile-146.

This sequence belongs to the UPF0756 family.

The protein localises to the cell membrane. The polypeptide is UPF0756 membrane protein MS1439 (Mannheimia succiniciproducens (strain KCTC 0769BP / MBEL55E)).